The chain runs to 308 residues: Aspartate carbamoyltransferase catalytic subunit (308 aa).

Arginine 58 and threonine 59 together coordinate carbamoyl phosphate. Lysine 86 provides a ligand contact to L-aspartate. Positions 108, 136, and 139 each coordinate carbamoyl phosphate. Residues arginine 169 and arginine 227 each contribute to the L-aspartate site. Positions 268 and 269 each coordinate carbamoyl phosphate.

It belongs to the aspartate/ornithine carbamoyltransferase superfamily. ATCase family. In terms of assembly, heterododecamer (2C3:3R2) of six catalytic PyrB chains organized as two trimers (C3), and six regulatory PyrI chains organized as three dimers (R2).

The catalysed reaction is carbamoyl phosphate + L-aspartate = N-carbamoyl-L-aspartate + phosphate + H(+). Its pathway is pyrimidine metabolism; UMP biosynthesis via de novo pathway; (S)-dihydroorotate from bicarbonate: step 2/3. Its function is as follows. Catalyzes the condensation of carbamoyl phosphate and aspartate to form carbamoyl aspartate and inorganic phosphate, the committed step in the de novo pyrimidine nucleotide biosynthesis pathway. The sequence is that of Aspartate carbamoyltransferase catalytic subunit from Chloroflexus aggregans (strain MD-66 / DSM 9485).